A 447-amino-acid chain; its full sequence is Phosphoglucosamine mutase (447 aa).

Ser-100 acts as the Phosphoserine intermediate in catalysis. Ser-100, Asp-240, Asp-242, and Asp-244 together coordinate Mg(2+). A Phosphoserine modification is found at Ser-100.

It belongs to the phosphohexose mutase family. Mg(2+) serves as cofactor. Activated by phosphorylation.

The enzyme catalyses alpha-D-glucosamine 1-phosphate = D-glucosamine 6-phosphate. In terms of biological role, catalyzes the conversion of glucosamine-6-phosphate to glucosamine-1-phosphate. This is Phosphoglucosamine mutase from Clostridium botulinum (strain Alaska E43 / Type E3).